Here is a 31-residue protein sequence, read N- to C-terminus: Cytochrome b6-f complex subunit 6 (31 aa).

A helical transmembrane segment spans residues 4–24 (ITSYFGFLLVALTITSALFIG).

It belongs to the PetL family. In terms of assembly, the 4 large subunits of the cytochrome b6-f complex are cytochrome b6, subunit IV (17 kDa polypeptide, PetD), cytochrome f and the Rieske protein, while the 4 small subunits are PetG, PetL, PetM and PetN. The complex functions as a dimer.

It is found in the plastid. Its subcellular location is the chloroplast thylakoid membrane. In terms of biological role, component of the cytochrome b6-f complex, which mediates electron transfer between photosystem II (PSII) and photosystem I (PSI), cyclic electron flow around PSI, and state transitions. PetL is important for photoautotrophic growth as well as for electron transfer efficiency and stability of the cytochrome b6-f complex. The chain is Cytochrome b6-f complex subunit 6 from Panax ginseng (Korean ginseng).